We begin with the raw amino-acid sequence, 122 residues long: T cell receptor gamma variable 9 (122 aa).

The first 20 residues, 1-20, serve as a signal peptide directing secretion; sequence MLSLLHTSTLAVLGALCVYG. In terms of domain architecture, Ig-like spans 27 to 122; it reads PQISSTKTLS…ATYYCALWEV (96 aa). An intrachain disulfide couples C43 to C117.

In terms of assembly, gamma-delta TR is a heterodimer composed of a gamma and delta chain; disulfide-linked. The gamma-delta TR is associated with the transmembrane signaling CD3 coreceptor proteins following the stoichiometry: a single gamma-delta TR heterodimer associates with one CD3D-CD3E heterodimer, one CD3G-CD3E heterodimer and one CD247 homodimer forming a stable octameric structure. Upon activation, gamma-delta TR complex associates with FCER1G to initiate intracellular signaling.

It localises to the cell membrane. Its function is as follows. V region of the variable domain of T cell receptor (TR) gamma chain that participates in the antigen recognition. Gamma-delta TRs recognize a variety of self and foreign non-peptide antigens frequently expressed at the epithelial boundaries between the host and external environment, including endogenous lipids presented by MH-like protein CD1D and phosphoantigens presented by butyrophilin-like molecule BTN3A1. Upon antigen recognition induces rapid, innate-like immune responses involved in pathogen clearance and tissue repair. Binding of gamma-delta TR complex to antigen triggers phosphorylation of immunoreceptor tyrosine-based activation motifs (ITAMs) in the CD3 chains by the LCK and FYN kinases, allowing the recruitment, phosphorylation, and activation of ZAP70 that facilitates phosphorylation of the scaffolding proteins LCP2 and LAT. This lead to the formation of a supramolecular signalosome that recruits the phospholipase PLCG1, resulting in calcium mobilization and ERK activation, ultimately leading to T cell expansion and differentiation into effector cells. Gamma-delta TRs are produced through somatic rearrangement of a limited repertoire of variable (V), diversity (D), and joining (J) genes. The potential diversity of gamma-delta TRs is conferred by the unique ability to rearrange (D) genes in tandem and to utilize all three reading frames. The combinatorial diversity is considerably increased by the sequence exonuclease trimming and random nucleotide (N) region additions which occur during the V-(D)-J rearrangements. The sequence is that of T cell receptor gamma variable 9 from Homo sapiens (Human).